We begin with the raw amino-acid sequence, 393 residues long: Protein Njmu-R1 (393 aa).

Positions 1-74 (MLPSLQESLD…AETPSGDDFS (74 aa)) are disordered. 2 positions are modified to phosphoserine: Ser-8 and Ser-18. A compositionally biased stretch (acidic residues) spans 9 to 24 (LDGDEKELESSEEGGS).

In terms of assembly, interacts with TBC1D23; this interaction may be indirect.

May have a role in spermatogenesis. The protein is Protein Njmu-R1 of Mus musculus (Mouse).